The sequence spans 734 residues: MKSLSSSSPGSSEDSAQSLLLTARLYDPCSFLGMHAAPNGRLIRVFQPYMSRVWLHTLSGYQPMRSVHQDGIFEWEGEGVMHPYLLRMENTATGVIEERHDPYAFPMQISGHDLYLFNEGRLLQAYHMLGAHRVRNHGVTGTRFAVWAPNAERVSVVGDFNRWDGRVYPMMVHGHSGVWELFIPDLPEGAIYKYEIRNRISGEILLKTDPYATTYELRPNNAALTPIEQKYDWKDDDWIARRKGWDWLHAPLNIYELHVGSWKRHPDGRFYSYHELADHLIPYLQDMGYSHVELLPISEHPLDESWGYQATGYFAVTSRYGSPEAFMSFVDRCHQAGIGVILDWVPAHFPQDSFSLARFDGTALYEHEDPRLGYHHDWGTYIFNYGRNEVKSFLLSSAHYWLSAFHIDGLRVDAVASMLYLNYSRKEGEWLPNRYGGHENLEAIEFLRALNTMVHGEFPGALTFAEESTSWPAVSRPAYLGGLGFSMKWNMGWMNDTLSYMQHDPVHRRYHHNELTFNQLYAYTENFVLPLSHDEVVHGKKSMLDKMPGDGWQKFANLRLLFTYQMTCPGKKINFMGNELGQGHEWRVGHELDWYLLERDPHRGIQALTRDLNHLYLNTPALHELDFFAEGFSWIDCHDVEQSVISYQRHARDGSFVLVVLNFTPILRTGYRVGIPGSSAYQEVFNSDSIYYDGSNAGNAGKISPTGQPWSGQPDSIIITLPPLAGVILKAADG.

Residue Asp413 is the Nucleophile of the active site. The Proton donor role is filled by Glu466.

The protein belongs to the glycosyl hydrolase 13 family. GlgB subfamily. Monomer.

The catalysed reaction is Transfers a segment of a (1-&gt;4)-alpha-D-glucan chain to a primary hydroxy group in a similar glucan chain.. It functions in the pathway glycan biosynthesis; glycogen biosynthesis. Catalyzes the formation of the alpha-1,6-glucosidic linkages in glycogen by scission of a 1,4-alpha-linked oligosaccharide from growing alpha-1,4-glucan chains and the subsequent attachment of the oligosaccharide to the alpha-1,6 position. This is 1,4-alpha-glucan branching enzyme GlgB from Nitrosomonas europaea (strain ATCC 19718 / CIP 103999 / KCTC 2705 / NBRC 14298).